A 278-amino-acid polypeptide reads, in one-letter code: ATPase SWSAP1 (278 aa).

The disordered stretch occupies residues 237–278; it reads SPEKKDSSAGSQSLTLGCDNLPGPGSPLDGILTSETGADSKT. A compositionally biased stretch (polar residues) spans 269-278; sequence TSETGADSKT.

Interacts with ZSWIM7; they form a functional complex involved in homologous recombination repair and stabilize each other. Interacts with RAD51, RAD51B, RAD51C, RAD51D and XRCC3; involved in homologous recombination repair.

The protein localises to the nucleus. ATPase which is preferentially stimulated by single-stranded DNA and is involved in homologous recombination repair (HRR). Has a DNA-binding activity which is independent of its ATPase activity. The chain is ATPase SWSAP1 (Swsap1) from Mus musculus (Mouse).